The following is a 465-amino-acid chain: Ribulose bisphosphate carboxylase large chain (465 aa).

Lys-4 is modified (N6,N6,N6-trimethyllysine). Residues Xaa-113 and Thr-163 each contribute to the substrate site. Lys-165 (proton acceptor) is an active-site residue. Lys-167 is a binding site for substrate. Residues Lys-191, Asp-193, and Glu-194 each contribute to the Mg(2+) site. N6-carboxylysine is present on Lys-191. Catalysis depends on His-284, which acts as the Proton acceptor. Residues Arg-285, His-317, and Ser-369 each coordinate substrate.

The protein belongs to the RuBisCO large chain family. Type I subfamily. In terms of assembly, heterohexadecamer of 8 large chains and 8 small chains; disulfide-linked. The disulfide link is formed within the large subunit homodimers. It depends on Mg(2+) as a cofactor. The disulfide bond which can form in the large chain dimeric partners within the hexadecamer appears to be associated with oxidative stress and protein turnover.

The protein localises to the plastid. It is found in the chloroplast. It carries out the reaction 2 (2R)-3-phosphoglycerate + 2 H(+) = D-ribulose 1,5-bisphosphate + CO2 + H2O. The catalysed reaction is D-ribulose 1,5-bisphosphate + O2 = 2-phosphoglycolate + (2R)-3-phosphoglycerate + 2 H(+). In terms of biological role, ruBisCO catalyzes two reactions: the carboxylation of D-ribulose 1,5-bisphosphate, the primary event in carbon dioxide fixation, as well as the oxidative fragmentation of the pentose substrate in the photorespiration process. Both reactions occur simultaneously and in competition at the same active site. This chain is Ribulose bisphosphate carboxylase large chain, found in Cornus obliqua (Silky dogwood).